The chain runs to 1365 residues: Nuclear pore complex protein Nup154 (1365 aa).

The interval 1–508 (MTLPQAQLDF…GTHIIEVLKM (508 aa)) is required for binding to Nup93-1 and anchoring to the nuclear pore complex. The interval 508–986 (MVDVLRQILL…KSINPLKGTA (479 aa)) is required for binding to chromatin.

The protein belongs to the non-repetitive/WGA-negative nucleoporin family. As to quaternary structure, interacts (via N-terminus) with Nup93-1. Interacts with Nup35. Interacts with cup.

The protein localises to the nucleus. Its subcellular location is the nuclear pore complex. The protein resides in the chromosome. It localises to the nucleus membrane. It is found in the cytoplasm. Component of the nuclear pore complex. Has a role in the organization of the inner nuclear membrane proteins at the nuclear envelope. In germ cells, plays a role in the nuclear localization of components of the dpp signaling pathways, such as Medea and phosphorylated Mad. Binds to chromatin, and together with Nup62 and Nup93-1, contributes to karyosome morphology and chromatin organization including attachment to the nuclear envelope in oocytes and nurse cells. Has a role in female fertility including egg chamber development; in nurse cells, has a role in the organization of F-actin in subcortical and cytoplasmic actin filaments important for the transfer of cytoplasm from nurse cells to the growing oocytes. Has a role in male spermatogenesis and fertility. Has a role in germ line cell proliferation. The protein is Nuclear pore complex protein Nup154 of Drosophila melanogaster (Fruit fly).